The sequence spans 577 residues: Arginine--tRNA ligase (577 aa).

Residues 122 to 132 carry the 'HIGH' region motif; it reads PNVAKEMHVGH.

This sequence belongs to the class-I aminoacyl-tRNA synthetase family. In terms of assembly, monomer.

The protein resides in the cytoplasm. The enzyme catalyses tRNA(Arg) + L-arginine + ATP = L-arginyl-tRNA(Arg) + AMP + diphosphate. The polypeptide is Arginine--tRNA ligase (Escherichia coli (strain K12 / MC4100 / BW2952)).